A 547-amino-acid chain; its full sequence is Aspartate 1-decarboxylase (547 aa).

N6-(pyridoxal phosphate)lysine is present on Lys338.

This sequence belongs to the group II decarboxylase family. Pyridoxal 5'-phosphate is required as a cofactor.

It catalyses the reaction L-aspartate + H(+) = beta-alanine + CO2. Its pathway is cofactor biosynthesis; (R)-pantothenate biosynthesis; beta-alanine from L-aspartate: step 1/1. Catalyzes the pyridoxal-dependent decarboxylation of aspartate to produce beta-alanine. Has weak activity with glutamate. In Aliivibrio fischeri (strain ATCC 700601 / ES114) (Vibrio fischeri), this protein is Aspartate 1-decarboxylase.